The primary structure comprises 317 residues: Transaldolase (317 aa).

The active-site Schiff-base intermediate with substrate is the K126.

Belongs to the transaldolase family. Type 1 subfamily. As to quaternary structure, homodimer.

The protein resides in the cytoplasm. The catalysed reaction is D-sedoheptulose 7-phosphate + D-glyceraldehyde 3-phosphate = D-erythrose 4-phosphate + beta-D-fructose 6-phosphate. The protein operates within carbohydrate degradation; pentose phosphate pathway; D-glyceraldehyde 3-phosphate and beta-D-fructose 6-phosphate from D-ribose 5-phosphate and D-xylulose 5-phosphate (non-oxidative stage): step 2/3. Transaldolase is important for the balance of metabolites in the pentose-phosphate pathway. The protein is Transaldolase of Burkholderia cenocepacia (strain ATCC BAA-245 / DSM 16553 / LMG 16656 / NCTC 13227 / J2315 / CF5610) (Burkholderia cepacia (strain J2315)).